Consider the following 485-residue polypeptide: Pyruvate kinase (485 aa).

A substrate-binding site is contributed by arginine 33. Positions 35, 37, 67, and 68 each coordinate K(+). Residue 35–38 coordinates ATP; that stretch reads NFSH. Residues arginine 74 and lysine 155 each contribute to the ATP site. Residue glutamate 221 participates in Mg(2+) binding. Glycine 244, aspartate 245, and threonine 277 together coordinate substrate. Aspartate 245 serves as a coordination point for Mg(2+).

The protein belongs to the pyruvate kinase family. As to quaternary structure, homotetramer. Requires Mg(2+) as cofactor. It depends on K(+) as a cofactor.

The enzyme catalyses pyruvate + ATP = phosphoenolpyruvate + ADP + H(+). It functions in the pathway carbohydrate degradation; glycolysis; pyruvate from D-glyceraldehyde 3-phosphate: step 5/5. The protein is Pyruvate kinase (pyk) of Chlamydia trachomatis serovar D (strain ATCC VR-885 / DSM 19411 / UW-3/Cx).